Reading from the N-terminus, the 709-residue chain is Fatty acid oxidation complex subunit alpha (709 aa).

Residues 1–188 (MEKTFNLTRR…KMGLVNDVVP (188 aa)) form an enoyl-CoA hydratase region. The segment at 308–709 (RKVKKAVILG…AMAAEKARFF (402 aa)) is 3-hydroxyacyl-CoA dehydrogenase.

The protein in the N-terminal section; belongs to the enoyl-CoA hydratase/isomerase family. In the central section; belongs to the 3-hydroxyacyl-CoA dehydrogenase family. In terms of assembly, heterotetramer of two alpha chains (FadJ) and two beta chains (FadI).

The protein resides in the cytoplasm. The enzyme catalyses a (3S)-3-hydroxyacyl-CoA = a (2E)-enoyl-CoA + H2O. It carries out the reaction a 4-saturated-(3S)-3-hydroxyacyl-CoA = a (3E)-enoyl-CoA + H2O. The catalysed reaction is a (3S)-3-hydroxyacyl-CoA + NAD(+) = a 3-oxoacyl-CoA + NADH + H(+). It catalyses the reaction (3S)-3-hydroxybutanoyl-CoA = (3R)-3-hydroxybutanoyl-CoA. Its pathway is lipid metabolism; fatty acid beta-oxidation. Its function is as follows. Catalyzes the formation of a hydroxyacyl-CoA by addition of water on enoyl-CoA. Also exhibits 3-hydroxyacyl-CoA epimerase and 3-hydroxyacyl-CoA dehydrogenase activities. This is Fatty acid oxidation complex subunit alpha from Shewanella sp. (strain ANA-3).